The sequence spans 91 residues: Putative regulatory protein DSY2730 (91 aa).

Belongs to the RemA family.

In Desulfitobacterium hafniense (strain Y51), this protein is Putative regulatory protein DSY2730.